Reading from the N-terminus, the 619-residue chain is Threonine--tRNA ligase (619 aa).

The editing domain stretch occupies residues 1–143 (MQLLLIHSDF…SRSIRIGEGE (143 aa)). The tract at residues 201 to 500 (PHVELMRRLE…AANGGLPMLP (300 aa)) is catalytic. Residues Cys-293, His-345, and His-469 each coordinate Zn(2+).

This sequence belongs to the class-II aminoacyl-tRNA synthetase family. Homodimer. It depends on Zn(2+) as a cofactor.

Its subcellular location is the cytoplasm. The enzyme catalyses tRNA(Thr) + L-threonine + ATP = L-threonyl-tRNA(Thr) + AMP + diphosphate + H(+). In terms of biological role, catalyzes the attachment of threonine to tRNA(Thr) in a two-step reaction: L-threonine is first activated by ATP to form Thr-AMP and then transferred to the acceptor end of tRNA(Thr). Also edits incorrectly charged L-seryl-tRNA(Thr). This Methanothrix thermoacetophila (strain DSM 6194 / JCM 14653 / NBRC 101360 / PT) (Methanosaeta thermophila) protein is Threonine--tRNA ligase.